Reading from the N-terminus, the 143-residue chain is uncharacterized protein (143 aa).

4 consecutive transmembrane segments (helical) span residues 7–29 (LFLFLHVVLATFWVGGMLFLSLV), 52–74 (FSLYGTFLSLFLLFVTGLVNTYL), 87–105 (LGVFFVVVFISLLHDLWAG), and 120–142 (WLGILNLILSLLLVYLGVRIRLG).

Its subcellular location is the cell membrane. This is an uncharacterized protein from Aquifex aeolicus (strain VF5).